The sequence spans 363 residues: G-protein coupled receptor 4 (363 aa).

Residues 1-8 are Extracellular-facing; that stretch reads MGNGTWEG. A glycan (N-linked (GlcNAc...) asparagine) is linked at Asn-3. Residues 9–45 traverse the membrane as a helical segment; that stretch reads CHVDSRVDHLFPPSLYIFVIGVGLPTNCLALWAAYRQ. Cystine bridges form between Cys-9–Cys-258 and Cys-90–Cys-168. Topologically, residues 46–49 are cytoplasmic; it reads VRQR. Residues 50-80 form a helical membrane-spanning segment; sequence NELGVYLMNLSIADLLYICTLPLWVDYFLHH. At 81-85 the chain is on the extracellular side; it reads DNWIH. Residues 86-121 form a helical membrane-spanning segment; that stretch reads GPGSCKLFGFIFYTNIYISIAFLCCISVDRYLAVAH. Residues 122–129 are Cytoplasmic-facing; that stretch reads PLRFARLR. The chain crosses the membrane as a helical span at residues 130-156; sequence RVKTAVAVSSVVWATELGANSVPLFHD. The Extracellular portion of the chain corresponds to 157–172; that stretch reads ELFRDRYNHTFCFEKF. The extracellular loop 2 (ECL2) stretch occupies residues 157–172; the sequence is ELFRDRYNHTFCFEKF. Asn-164 carries an N-linked (GlcNAc...) asparagine glycan. The helical transmembrane segment at 173-210 threads the bilayer; sequence PMEGWVAWMNLYRVFVGFLFPWALMLLSYRGILRAVRG. Over 211 to 214 the chain is Cytoplasmic; that stretch reads SVST. A helical transmembrane segment spans residues 215 to 250; the sequence is ERQEKAKIKRLALSLIAIVLVCFAPYHVLLLSRSAV. Residues 251–260 lie on the Extracellular side of the membrane; that stretch reads YLGHPWDCGF. A helical transmembrane segment spans residues 261-289; it reads EERVFSAYHSSLAFTSLNCVADPILYCLV. The Cytoplasmic portion of the chain corresponds to 290 to 363; that stretch reads NEGARSDVAK…QLKMLPPPAP (74 aa). A disordered region spans residues 344-363; sequence ASPPSQGDQVQLKMLPPPAP.

The protein belongs to the G-protein coupled receptor 1 family.

It localises to the cell membrane. Activated by a network of residues that connects an extracellular-facing cavity to Glu-145, a conserved charged residue buried in the transmembrane core of the receptor. Protonation likely drives conformational changes in extracellular loop 2 (ECL2), which stabilizes movement of transmembrane 3 (TM3) and a series of rearrangements that connect the extracellular-facing cavity to Glu-145, a residue only conserved in proton-sensing G-protein coupled receptors. Proton-sensing G-protein coupled receptor activated by extracellular pH, which is required to monitor pH changes and generate adaptive reactions. Activated by an optimal pH of 6.8-7.2. Ligand binding causes a conformation change that triggers signaling via guanine nucleotide-binding proteins (G proteins) and modulates the activity of downstream effectors, such as adenylate cyclase. GPR4 is mainly coupled to G(s) G proteins and mediates activation of adenylate cyclase activity. May also couple with G(q) and G(12)/G(13) G proteins. Acts as a key regulator of respiratory sensitivity to CO2/H(+) in brain retrotrapezoid nucleus neurons: acts by mediating detection of protons generated by the formation of carbonic acid in the blood, an important mechanism to impulse to breathe. Also acts as a regulator of acid secretion in the kidney collecting duct by maintaining acid-base homeostasis in the kidney. Acidosis-induced GPR4 activation increases paracellular gap formation and permeability of vascular endothelial cells, possibly through the G(12)/G(13)/Rho GTPase signaling pathway. The polypeptide is G-protein coupled receptor 4 (GPR4) (Sus scrofa (Pig)).